The sequence spans 699 residues: Ribosomal RNA large subunit methyltransferase K/L (699 aa).

Positions 44-155 (DAYKLCLWSR…RDNVILGIDL (112 aa)) constitute a THUMP domain.

The protein belongs to the methyltransferase superfamily. RlmKL family.

The protein resides in the cytoplasm. The catalysed reaction is guanosine(2445) in 23S rRNA + S-adenosyl-L-methionine = N(2)-methylguanosine(2445) in 23S rRNA + S-adenosyl-L-homocysteine + H(+). It catalyses the reaction guanosine(2069) in 23S rRNA + S-adenosyl-L-methionine = N(2)-methylguanosine(2069) in 23S rRNA + S-adenosyl-L-homocysteine + H(+). Its function is as follows. Specifically methylates the guanine in position 2445 (m2G2445) and the guanine in position 2069 (m7G2069) of 23S rRNA. This is Ribosomal RNA large subunit methyltransferase K/L from Alteromonas mediterranea (strain DSM 17117 / CIP 110805 / LMG 28347 / Deep ecotype).